The primary structure comprises 78 residues: Putative membrane protein insertion efficiency factor (78 aa).

This sequence belongs to the UPF0161 family.

Its subcellular location is the cell membrane. Could be involved in insertion of integral membrane proteins into the membrane. The protein is Putative membrane protein insertion efficiency factor of Limosilactobacillus reuteri (strain DSM 20016) (Lactobacillus reuteri).